Here is a 1378-residue protein sequence, read N- to C-terminus: DNA-directed RNA polymerase subunit beta (1378 aa).

This sequence belongs to the RNA polymerase beta chain family. In terms of assembly, the RNAP catalytic core consists of 2 alpha, 1 beta, 1 beta' and 1 omega subunit. When a sigma factor is associated with the core the holoenzyme is formed, which can initiate transcription.

The enzyme catalyses RNA(n) + a ribonucleoside 5'-triphosphate = RNA(n+1) + diphosphate. Functionally, DNA-dependent RNA polymerase catalyzes the transcription of DNA into RNA using the four ribonucleoside triphosphates as substrates. The polypeptide is DNA-directed RNA polymerase subunit beta (Campylobacter jejuni (strain RM1221)).